Here is a 208-residue protein sequence, read N- to C-terminus: Uridine kinase (208 aa).

11–18 (GGTGSGKS) is an ATP binding site.

It belongs to the uridine kinase family.

The protein localises to the cytoplasm. The catalysed reaction is uridine + ATP = UMP + ADP + H(+). It catalyses the reaction cytidine + ATP = CMP + ADP + H(+). Its pathway is pyrimidine metabolism; CTP biosynthesis via salvage pathway; CTP from cytidine: step 1/3. It functions in the pathway pyrimidine metabolism; UMP biosynthesis via salvage pathway; UMP from uridine: step 1/1. The chain is Uridine kinase from Alkaliphilus metalliredigens (strain QYMF).